The primary structure comprises 67 residues: UPF0337 protein SP_1805 (67 aa).

The segment at 1-30 (MSVEEKLNQAKGSIKEGVGKAIGDEKMEKE) is disordered.

Belongs to the UPF0337 (CsbD) family.

The protein is UPF0337 protein SP_1805 of Streptococcus pneumoniae serotype 4 (strain ATCC BAA-334 / TIGR4).